A 160-amino-acid chain; its full sequence is SsrA-binding protein (160 aa).

It belongs to the SmpB family.

It is found in the cytoplasm. Required for rescue of stalled ribosomes mediated by trans-translation. Binds to transfer-messenger RNA (tmRNA), required for stable association of tmRNA with ribosomes. tmRNA and SmpB together mimic tRNA shape, replacing the anticodon stem-loop with SmpB. tmRNA is encoded by the ssrA gene; the 2 termini fold to resemble tRNA(Ala) and it encodes a 'tag peptide', a short internal open reading frame. During trans-translation Ala-aminoacylated tmRNA acts like a tRNA, entering the A-site of stalled ribosomes, displacing the stalled mRNA. The ribosome then switches to translate the ORF on the tmRNA; the nascent peptide is terminated with the 'tag peptide' encoded by the tmRNA and targeted for degradation. The ribosome is freed to recommence translation, which seems to be the essential function of trans-translation. This is SsrA-binding protein from Shewanella amazonensis (strain ATCC BAA-1098 / SB2B).